A 144-amino-acid chain; its full sequence is Transcription antitermination protein NusB (144 aa).

The protein belongs to the NusB family.

Functionally, involved in transcription antitermination. Required for transcription of ribosomal RNA (rRNA) genes. Binds specifically to the boxA antiterminator sequence of the ribosomal RNA (rrn) operons. The protein is Transcription antitermination protein NusB of Paraburkholderia phytofirmans (strain DSM 17436 / LMG 22146 / PsJN) (Burkholderia phytofirmans).